A 695-amino-acid chain; its full sequence is UvrABC system protein B (695 aa).

One can recognise a Helicase ATP-binding domain in the interval 25 to 176; that stretch reads KSILEGHRFQ…NQREVLRDLA (152 aa). 38–45 contacts ATP; sequence GATGTGKT. The Beta-hairpin motif lies at 91 to 114; the sequence is YYDYYQPEAYVPSTDTYIAKSSSI. The 164-residue stretch at 454–617 folds into the Helicase C-terminal domain; the sequence is LLGEIYLRLE…ITPKPIIKKN (164 aa). The UVR domain occupies 652 to 687; it reads PELIGQLELKMKAAAKNLEFEEAAQLRDQIKKLRQR.

It belongs to the UvrB family. Forms a heterotetramer with UvrA during the search for lesions. Interacts with UvrC in an incision complex.

It localises to the cytoplasm. Functionally, the UvrABC repair system catalyzes the recognition and processing of DNA lesions. A damage recognition complex composed of 2 UvrA and 2 UvrB subunits scans DNA for abnormalities. Upon binding of the UvrA(2)B(2) complex to a putative damaged site, the DNA wraps around one UvrB monomer. DNA wrap is dependent on ATP binding by UvrB and probably causes local melting of the DNA helix, facilitating insertion of UvrB beta-hairpin between the DNA strands. Then UvrB probes one DNA strand for the presence of a lesion. If a lesion is found the UvrA subunits dissociate and the UvrB-DNA preincision complex is formed. This complex is subsequently bound by UvrC and the second UvrB is released. If no lesion is found, the DNA wraps around the other UvrB subunit that will check the other stand for damage. In Synechococcus sp. (strain JA-3-3Ab) (Cyanobacteria bacterium Yellowstone A-Prime), this protein is UvrABC system protein B.